We begin with the raw amino-acid sequence, 99 residues long: Regulatory protein FanB (99 aa).

Its function is as follows. Trans-acting protein involved in the regulation of the biogenesis of K99 fimbriae (FanC). In Escherichia coli, this protein is Regulatory protein FanB (fanB).